A 223-amino-acid chain; its full sequence is MNKKEKLELLKDFNLYCLTCEEYSIGRKNIDVVREILEAGVKIIQYREKKKPMREKYHEVVKIRDLTAKYNALLIVNDHLDLTKIVEADGVHIGQEDYPIEVAKEFLGENFIIGLTTHTKEQVMEALRKGADYIGLGPIFPSYTKEKPHPPIGIEILDWAIKNISIPVVAIGGIKESNIHEILNLGAKCIAMVTEIVSSPNIYEKTRKIIHILEGYKNGKYIA.

Residues 45–49 (QYREK) and Asn-77 each bind 4-amino-2-methyl-5-(diphosphooxymethyl)pyrimidine. Mg(2+) is bound by residues Asp-78 and Asp-97. A 4-amino-2-methyl-5-(diphosphooxymethyl)pyrimidine-binding site is contributed by Thr-116. Residue 142 to 144 (SYT) coordinates 2-[(2R,5Z)-2-carboxy-4-methylthiazol-5(2H)-ylidene]ethyl phosphate. Position 145 (Lys-145) interacts with 4-amino-2-methyl-5-(diphosphooxymethyl)pyrimidine. Residues Gly-173 and 193–194 (VT) contribute to the 2-[(2R,5Z)-2-carboxy-4-methylthiazol-5(2H)-ylidene]ethyl phosphate site.

It belongs to the thiamine-phosphate synthase family. Requires Mg(2+) as cofactor.

The catalysed reaction is 2-[(2R,5Z)-2-carboxy-4-methylthiazol-5(2H)-ylidene]ethyl phosphate + 4-amino-2-methyl-5-(diphosphooxymethyl)pyrimidine + 2 H(+) = thiamine phosphate + CO2 + diphosphate. The enzyme catalyses 2-(2-carboxy-4-methylthiazol-5-yl)ethyl phosphate + 4-amino-2-methyl-5-(diphosphooxymethyl)pyrimidine + 2 H(+) = thiamine phosphate + CO2 + diphosphate. It catalyses the reaction 4-methyl-5-(2-phosphooxyethyl)-thiazole + 4-amino-2-methyl-5-(diphosphooxymethyl)pyrimidine + H(+) = thiamine phosphate + diphosphate. Its pathway is cofactor biosynthesis; thiamine diphosphate biosynthesis; thiamine phosphate from 4-amino-2-methyl-5-diphosphomethylpyrimidine and 4-methyl-5-(2-phosphoethyl)-thiazole: step 1/1. In terms of biological role, condenses 4-methyl-5-(beta-hydroxyethyl)thiazole monophosphate (THZ-P) and 2-methyl-4-amino-5-hydroxymethyl pyrimidine pyrophosphate (HMP-PP) to form thiamine monophosphate (TMP). This Dictyoglomus turgidum (strain DSM 6724 / Z-1310) protein is Thiamine-phosphate synthase.